A 549-amino-acid polypeptide reads, in one-letter code: Exodeoxyribonuclease 7 large subunit (549 aa).

The disordered stretch occupies residues L511–F549.

The protein belongs to the XseA family. As to quaternary structure, heterooligomer composed of large and small subunits.

The protein localises to the cytoplasm. The enzyme catalyses Exonucleolytic cleavage in either 5'- to 3'- or 3'- to 5'-direction to yield nucleoside 5'-phosphates.. In terms of biological role, bidirectionally degrades single-stranded DNA into large acid-insoluble oligonucleotides, which are then degraded further into small acid-soluble oligonucleotides. This Beijerinckia indica subsp. indica (strain ATCC 9039 / DSM 1715 / NCIMB 8712) protein is Exodeoxyribonuclease 7 large subunit.